We begin with the raw amino-acid sequence, 252 residues long: Geranylgeranylglyceryl phosphate synthase (252 aa).

Positions 26 and 55 each coordinate Mg(2+). Residues 174–180 (YLEAGSG), 205–206 (GG), and 227–228 (GT) contribute to the sn-glycerol 1-phosphate site.

The protein belongs to the GGGP/HepGP synthase family. Group II subfamily. Homotetramer. Homohexamer. It depends on Mg(2+) as a cofactor.

The protein localises to the cytoplasm. It carries out the reaction sn-glycerol 1-phosphate + (2E,6E,10E)-geranylgeranyl diphosphate = sn-3-O-(geranylgeranyl)glycerol 1-phosphate + diphosphate. It functions in the pathway membrane lipid metabolism; glycerophospholipid metabolism. Functionally, prenyltransferase that catalyzes the transfer of the geranylgeranyl moiety of geranylgeranyl diphosphate (GGPP) to the C3 hydroxyl of sn-glycerol-1-phosphate (G1P). This reaction is the first ether-bond-formation step in the biosynthesis of archaeal membrane lipids. In Thermococcus kodakarensis (strain ATCC BAA-918 / JCM 12380 / KOD1) (Pyrococcus kodakaraensis (strain KOD1)), this protein is Geranylgeranylglyceryl phosphate synthase.